The chain runs to 323 residues: tRNA U34 carboxymethyltransferase (323 aa).

Carboxy-S-adenosyl-L-methionine-binding positions include Lys91, Trp105, Lys110, Gly130, 181 to 182 (IE), Met196, Tyr200, and Arg315.

It belongs to the class I-like SAM-binding methyltransferase superfamily. CmoB family. As to quaternary structure, homotetramer.

It carries out the reaction carboxy-S-adenosyl-L-methionine + 5-hydroxyuridine(34) in tRNA = 5-carboxymethoxyuridine(34) in tRNA + S-adenosyl-L-homocysteine + H(+). Catalyzes carboxymethyl transfer from carboxy-S-adenosyl-L-methionine (Cx-SAM) to 5-hydroxyuridine (ho5U) to form 5-carboxymethoxyuridine (cmo5U) at position 34 in tRNAs. The chain is tRNA U34 carboxymethyltransferase from Sodalis glossinidius (strain morsitans).